Here is a 460-residue protein sequence, read N- to C-terminus: Alpha-amylase (460 aa).

A signal peptide spans 1–21; sequence MASRTLSGALALAAAATAVLA. The Ca(2+) site is built by asparagine 121, glutamine 167, and aspartate 176. Aspartate 206 functions as the Nucleophile in the catalytic mechanism. Ca(2+) is bound at residue histidine 210. The active-site Proton donor is glutamate 233.

Belongs to the glycosyl hydrolase 13 family. Monomer. It depends on Ca(2+) as a cofactor.

It catalyses the reaction Endohydrolysis of (1-&gt;4)-alpha-D-glucosidic linkages in polysaccharides containing three or more (1-&gt;4)-alpha-linked D-glucose units.. The chain is Alpha-amylase (amy) from Streptomyces thermoviolaceus.